The following is a 122-amino-acid chain: RxLR effector protein Avh52 (122 aa).

A signal peptide spans 1-21; that stretch reads MRLTSILVLVIAATFHTTGTA. Residues 50 to 68 carry the RxLR-dEER motif; sequence RLLRRVEKDKVDYEQDEQR. Residues 69 to 86 form a TAP1-binding region; that stretch reads SFGALKDAVKKLNPVTAV. The segment at 87–98 is nuclear localization signal (NLS); that stretch reads KKFFKQRARRKK.

The protein belongs to the RxLR effector family. As to quaternary structure, interacts with host acetyl transferase TAP1.

Its subcellular location is the secreted. It is found in the host nucleus. Functionally, effector that suppresses plant defense responses during the early stages of pathogen infection. Suppresses cell death induced by effectors and PAMPs in plant hosts. Interacts with host acetyltransferase TAP1 and causes TAP1 relocation into the nucleus where it acetylates histones H2A and H3 during early infection, thereby promoting susceptibility of host plant to P.sojae. This chain is RxLR effector protein Avh52, found in Phytophthora sojae (Soybean stem and root rot agent).